The primary structure comprises 220 residues: Metalloproteinase inhibitor 2 (220 aa).

The N-terminal stretch at 1 to 26 is a signal peptide; the sequence is MGAAARSLRLALGLLLLATLLRPADA. Residue C27 coordinates Zn(2+). Involved in metalloproteinase-binding stretches follow at residues 27-30 and 95-96; these read CSCS and SA. 6 disulfides stabilise this stretch: C27–C98, C29–C127, C39–C152, C154–C201, C159–C164, and C172–C193. Residues 27 to 152 form the NTR domain; the sequence is CSCSPVHPQQ…SLNHRYQMGC (126 aa).

The protein belongs to the protease inhibitor I35 (TIMP) family. Interacts (via the C-terminal) with MMP2 (via the C-terminal PEX domain); the interaction inhibits the MMP2 activity. Post-translationally, the activity of TIMP2 is dependent on the presence of disulfide bonds.

It is found in the secreted. Its function is as follows. Complexes with metalloproteinases (such as collagenases) and irreversibly inactivates them by binding to their catalytic zinc cofactor. This is Metalloproteinase inhibitor 2 (Timp2) from Rattus norvegicus (Rat).